Consider the following 259-residue polypeptide: 5'-nucleotidase SurE (259 aa).

Residues Asp10, Asp11, Ser41, and Asn96 each coordinate a divalent metal cation.

Belongs to the SurE nucleotidase family. Requires a divalent metal cation as cofactor.

It localises to the cytoplasm. It carries out the reaction a ribonucleoside 5'-phosphate + H2O = a ribonucleoside + phosphate. Its function is as follows. Nucleotidase that shows phosphatase activity on nucleoside 5'-monophosphates. The polypeptide is 5'-nucleotidase SurE (Wolinella succinogenes (strain ATCC 29543 / DSM 1740 / CCUG 13145 / JCM 31913 / LMG 7466 / NCTC 11488 / FDC 602W) (Vibrio succinogenes)).